The primary structure comprises 386 residues: Terpene cyclase 6 (386 aa).

Mg(2+)-binding residues include D128, N276, and S280. The D(D/E)XX(D/E) motif signature appears at 128–132; it reads DDEID. The NSE motif signature appears at 276-284; sequence NEILSLQKE. The WxxxxxRY motif signature appears at 360 to 367; sequence WSYNCERY. (2E,6E)-farnesyl diphosphate contacts are provided by R366 and Y367.

This sequence belongs to the terpene synthase family. As to quaternary structure, homodimer. Requires Mg(2+) as cofactor.

It carries out the reaction (2E,6E)-farnesyl diphosphate + H2O = trichobrasilenol + diphosphate. The catalysed reaction is (2E,6E)-farnesyl diphosphate = alpha-humulene + diphosphate. It catalyses the reaction (2E,6E)-farnesyl diphosphate = (-)-(E)-beta-caryophyllene + diphosphate. The enzyme catalyses (2E,6E)-farnesyl diphosphate = (E)-2-epi-beta-caryophyllene + diphosphate. It carries out the reaction (2E,6E)-farnesyl diphosphate + H2O = (+)-isoafricanol + diphosphate. The catalysed reaction is (2E,6E)-farnesyl diphosphate + H2O = (+)-(2S,3R,9R)-pristinol + diphosphate. It catalyses the reaction (2E,6E)-farnesyl diphosphate = african-3-ene + diphosphate. The enzyme catalyses (2E,6E)-farnesyl diphosphate = african-1-ene + diphosphate. It participates in sesquiterpene biosynthesis. Terpene cyclase that is able to convert FPP into a mixture of sesquiterpene hydrocarbons and alcohols. The main product is trichobrasilenol. Additionally, side products include alpha-humulene, caryophyllene, 2-epi-caryophyllene, african-3-ene, african-1-ene, isoafricanol and pristinol. Does not accept GPP, GGPP, and GFPP as substrates. The polypeptide is Terpene cyclase 6 (Hypocrea atroviridis (Trichoderma atroviride)).